We begin with the raw amino-acid sequence, 224 residues long: Tumor protein D52 (224 aa).

The segment at 29-53 is disordered; that stretch reads LSPSGNTSPPGSPTQNVGLLKTEPV. The residue at position 35 (T35) is a Phosphothreonine. Phosphoserine occurs at positions 36 and 40. A coiled-coil region spans residues 61–113; it reads VTMLSAPEALTEEEQEELRRELTKVEEEIQTLSQVLAAKEKHLAELKRKLGIS. T138, S175, and S223 each carry phosphoserine. The tract at residues 186–224 is disordered; the sequence is KVGGAKPAGGDFGEVLNSTANATSTMTTEPPPEQMTESP. Residues 202 to 224 show a composition bias toward low complexity; the sequence is NSTANATSTMTTEPPPEQMTESP.

This sequence belongs to the TPD52 family. Forms a homodimer or heterodimer with other members of the family. In terms of tissue distribution, isoform 2 is expressed at higher levels in kidney and brain than in liver, lung, testis and heart. Within the brain, isoform 2 is highly expressed in the granular layer of the cerebellum, the cortex and the hippocampus. In embryos, isoform 2 is expressed in the epithelium of the developing intestine, stomach, olfactory epithelium, neuronal layers of the retina, salivary gland, kidney and dorsal root ganglion.

The protein is Tumor protein D52 (Tpd52) of Mus musculus (Mouse).